The following is a 105-amino-acid chain: Keratin-associated protein 17-1 (105 aa).

In terms of assembly, interacts with hair keratins.

Functionally, in the hair cortex, hair keratin intermediate filaments are embedded in an interfilamentous matrix, consisting of hair keratin-associated proteins (KRTAP), which are essential for the formation of a rigid and resistant hair shaft through their extensive disulfide bond cross-linking with abundant cysteine residues of hair keratins. The matrix proteins include the high-sulfur and high-glycine-tyrosine keratins. The protein is Keratin-associated protein 17-1 (KRTAP17-1) of Homo sapiens (Human).